Reading from the N-terminus, the 267-residue chain is tRNA-cytidine(32) 2-sulfurtransferase 2 (267 aa).

Positions 42 to 47 (SGGKDS) match the PP-loop motif motif. [4Fe-4S] cluster-binding residues include Cys-117, Cys-120, and Cys-208.

This sequence belongs to the TtcA family. Homodimer. The cofactor is Mg(2+). It depends on [4Fe-4S] cluster as a cofactor.

The protein localises to the cytoplasm. It carries out the reaction cytidine(32) in tRNA + S-sulfanyl-L-cysteinyl-[cysteine desulfurase] + AH2 + ATP = 2-thiocytidine(32) in tRNA + L-cysteinyl-[cysteine desulfurase] + A + AMP + diphosphate + H(+). It participates in tRNA modification. In terms of biological role, catalyzes the ATP-dependent 2-thiolation of cytidine in position 32 of tRNA, to form 2-thiocytidine (s(2)C32). The sulfur atoms are provided by the cysteine/cysteine desulfurase (IscS) system. The protein is tRNA-cytidine(32) 2-sulfurtransferase 2 of Francisella tularensis subsp. holarctica (strain FTNF002-00 / FTA).